Reading from the N-terminus, the 100-residue chain is Co-chaperonin GroES (100 aa).

This sequence belongs to the GroES chaperonin family. In terms of assembly, heptamer of 7 subunits arranged in a ring. Interacts with the chaperonin GroEL.

Its subcellular location is the cytoplasm. Its function is as follows. Together with the chaperonin GroEL, plays an essential role in assisting protein folding. The GroEL-GroES system forms a nano-cage that allows encapsulation of the non-native substrate proteins and provides a physical environment optimized to promote and accelerate protein folding. GroES binds to the apical surface of the GroEL ring, thereby capping the opening of the GroEL channel. This chain is Co-chaperonin GroES, found in Rhodothermus marinus (Rhodothermus obamensis).